The sequence spans 394 residues: Elongation factor Tu (394 aa).

Positions 10–204 (KAHVNIGTIG…SVDSYIPTPT (195 aa)) constitute a tr-type G domain. The tract at residues 19 to 26 (GHIDHGKT) is G1. 19–26 (GHIDHGKT) contributes to the GTP binding site. T26 serves as a coordination point for Mg(2+). The G2 stretch occupies residues 60–64 (GITIN). Residues 81 to 84 (DCPG) form a G3 region. Residues 81 to 85 (DCPGH) and 136 to 139 (NKCD) each bind GTP. Positions 136–139 (NKCD) are G4. Residues 174-176 (SAL) are G5.

Belongs to the TRAFAC class translation factor GTPase superfamily. Classic translation factor GTPase family. EF-Tu/EF-1A subfamily. Monomer.

The protein resides in the cytoplasm. The catalysed reaction is GTP + H2O = GDP + phosphate + H(+). In terms of biological role, GTP hydrolase that promotes the GTP-dependent binding of aminoacyl-tRNA to the A-site of ribosomes during protein biosynthesis. The polypeptide is Elongation factor Tu (Malacoplasma penetrans (strain HF-2) (Mycoplasma penetrans)).